A 215-amino-acid chain; its full sequence is Cytochrome b6 (215 aa).

The chain crosses the membrane as a helical span at residues 32–52 (IFYCLGGITLTCFLVQVATGF). Cys-35 provides a ligand contact to heme c. Residues His-86 and His-100 each coordinate heme b. The next 3 helical transmembrane spans lie at 90–110 (ASMM…TGGF), 116–136 (LTWV…VTGY), and 186–206 (LHTF…FLMI). The heme b site is built by His-187 and His-202.

It belongs to the cytochrome b family. PetB subfamily. In terms of assembly, the 4 large subunits of the cytochrome b6-f complex are cytochrome b6, subunit IV (17 kDa polypeptide, PetD), cytochrome f and the Rieske protein, while the 4 small subunits are PetG, PetL, PetM and PetN. The complex functions as a dimer. Heme b is required as a cofactor. Heme c serves as cofactor.

The protein localises to the plastid. Its subcellular location is the chloroplast thylakoid membrane. Component of the cytochrome b6-f complex, which mediates electron transfer between photosystem II (PSII) and photosystem I (PSI), cyclic electron flow around PSI, and state transitions. This chain is Cytochrome b6, found in Nicotiana tabacum (Common tobacco).